Reading from the N-terminus, the 280-residue chain is Transcription factor MYB60 (280 aa).

HTH myb-type domains follow at residues 9–65 (KIGI…RPGI) and 66–116 (KRGN…KKKL). 2 consecutive DNA-binding regions (H-T-H motif) follow at residues 37 to 61 (WRSV…TNYL) and 89 to 112 (WASI…NTHL). Residues C49 and C53 each carry the S-nitrosocysteine modification. The span at 118–127 (KSDSDERSRS) shows a compositional bias: basic and acidic residues. Disordered regions lie at residues 118–149 (KSDS…TYAS) and 204–247 (EEGH…NATP). Residues 128-149 (ENIALQTSSTRNTINHRSTYAS) are compositionally biased toward polar residues.

In terms of tissue distribution, specifically expressed in guard cells. Present in seedlings, leaves, stems and flowers.

The protein resides in the nucleus. In terms of biological role, transcription factor involved in the regulation of gene (e.g. drought-regulated and flavonoid biosynthetic genes) expression and stomatal movements leading to negative regulation of responses to drought and responses to other physiological stimuli (e.g. light). Promotes guard cell deflation in response to water deficit. Triggers root growth upon osmotic stress (e.g. mannitol containing medium). This Arabidopsis thaliana (Mouse-ear cress) protein is Transcription factor MYB60.